A 139-amino-acid polypeptide reads, in one-letter code: ATP synthase epsilon chain 2 (139 aa).

This sequence belongs to the ATPase epsilon chain family. As to quaternary structure, F-type ATPases have 2 components, CF(1) - the catalytic core - and CF(0) - the membrane proton channel. CF(1) has five subunits: alpha(3), beta(3), gamma(1), delta(1), epsilon(1). CF(0) has three main subunits: a, b and c.

Its subcellular location is the cell inner membrane. Functionally, produces ATP from ADP in the presence of a proton gradient across the membrane. The chain is ATP synthase epsilon chain 2 from Paraburkholderia xenovorans (strain LB400).